Consider the following 338-residue polypeptide: Activator of 90 kDa heat shock protein ATPase homolog 1 (338 aa).

The residue at position 3 (Lys3) is an N6-acetyllysine. Residue Lys182 forms a Glycyl lysine isopeptide (Lys-Gly) (interchain with G-Cter in SUMO1) linkage. Residue Ser193 is modified to Phosphoserine. A Glycyl lysine isopeptide (Lys-Gly) (interchain with G-Cter in SUMO2) cross-link involves residue Lys203. Lys212 carries the post-translational modification N6-acetyllysine. The residue at position 223 (Tyr223) is a Phosphotyrosine; by ABL. Residue Ser258 is modified to Phosphoserine.

It belongs to the AHA1 family. As to quaternary structure, interacts with HSPCA/HSP90. Interacts (phosphorylated on Tyr-223) with HSP90AA1; the interaction activates HSP90AA1 ATPase activity. Interacts with HSP90AB1. Interacts with GCH1. Interacts with SRPK1. Interacts with FLCN. (Microbial infection) Interacts with vesicular stomatitis virus glycoprotein (VSV G) (via cytoplasmic tail). In terms of processing, phosphorylation at Tyr-223 enhances binding to chaperone HSP90AA1. Expressed in numerous tissues, including brain, heart, skeletal muscle and kidney and, at lower levels, liver and placenta.

The protein localises to the cytoplasm. The protein resides in the cytosol. It localises to the endoplasmic reticulum. Functionally, acts as a co-chaperone of HSP90AA1. Activates the ATPase activity of HSP90AA1 leading to increase in its chaperone activity. Competes with the inhibitory co-chaperone FNIP1 for binding to HSP90AA1, thereby providing a reciprocal regulatory mechanism for chaperoning of client proteins. Competes with the inhibitory co-chaperone TSC1 for binding to HSP90AA1, thereby providing a reciprocal regulatory mechanism for chaperoning of client proteins. The sequence is that of Activator of 90 kDa heat shock protein ATPase homolog 1 (AHSA1) from Homo sapiens (Human).